The sequence spans 409 residues: NADH-quinone oxidoreductase subunit D (409 aa).

This sequence belongs to the complex I 49 kDa subunit family. As to quaternary structure, NDH-1 is composed of 14 different subunits. Subunits NuoB, C, D, E, F, and G constitute the peripheral sector of the complex.

The protein resides in the cell inner membrane. It catalyses the reaction a quinone + NADH + 5 H(+)(in) = a quinol + NAD(+) + 4 H(+)(out). NDH-1 shuttles electrons from NADH, via FMN and iron-sulfur (Fe-S) centers, to quinones in the respiratory chain. The immediate electron acceptor for the enzyme in this species is believed to be ubiquinone. Couples the redox reaction to proton translocation (for every two electrons transferred, four hydrogen ions are translocated across the cytoplasmic membrane), and thus conserves the redox energy in a proton gradient. This is NADH-quinone oxidoreductase subunit D from Campylobacter concisus (strain 13826).